A 597-amino-acid polypeptide reads, in one-letter code: Fructan 1-exohydrolase w1 (597 aa).

Positions 1-20 (MAQAWAFLLPVLVFGSYVTS) are cleaved as a signal peptide. Aspartate 76 is an active-site residue. N-linked (GlcNAc...) asparagine glycosylation is found at asparagine 169, asparagine 237, and asparagine 249. Cysteine 447 and cysteine 493 form a disulfide bridge. The N-linked (GlcNAc...) asparagine glycan is linked to asparagine 568.

The protein belongs to the glycosyl hydrolase 32 family.

It carries out the reaction Hydrolysis of terminal, non-reducing (2-&gt;1)-linked beta-D-fructofuranose residues in fructans.. With respect to regulation, inhibited by sucrose. Its function is as follows. Hydrolyzes inulin-type beta-(2,1)-fructans and beta-(2,1)-linkages in branched fructans. Has low activity against beta-(2,6)-linked fructans. May play a role as a beta-(2,1)-trimmer during graminan biosynthesis. The polypeptide is Fructan 1-exohydrolase w1 (Triticum aestivum (Wheat)).